We begin with the raw amino-acid sequence, 635 residues long: Putative adagio-like protein 2 (635 aa).

The span at 1 to 25 shows a compositional bias: acidic residues; it reads MEWDSDSEGSGDEEEEEEEEEEEGV. Residues 1–32 are disordered; sequence MEWDSDSEGSGDEEEEEEEEEEEGVEVGGGGD. Residues 44–123 form the PAS domain; the sequence is ALAIEGVLGA…TDIRRCLEEG (80 aa). Cys91 is subject to S-4a-FMN cysteine. The F-box domain maps to 209–255; sequence SDLFLLSDEVLCQKILSRLSPRDIASVNSVCKRLYHLTRNDDLWRMV. 4 Kelch repeats span residues 371–421, 423–474, 476–530, and 542–594; these read RLVL…TLDG, KLVV…VYDG, KILM…PPPR, and RILI…VVGG.

This sequence belongs to the ADAGIO family. Post-translationally, FMN binds covalently to cysteine after exposure to blue light and is reversed in the dark.

The protein localises to the nucleus. The protein operates within protein modification; protein ubiquitination. In terms of biological role, component of an E3 ubiquitin ligase complex that plays a central role in blue light-dependent circadian cycles. Acts as a blue light photoreceptor, due to the presence of FMN, that mediates light-regulated protein degradation of critical clock components by targeting them to the proteasome complex. This is Putative adagio-like protein 2 from Oryza sativa subsp. japonica (Rice).